The following is a 175-amino-acid chain: uncharacterized protein (175 aa).

This is an uncharacterized protein from Escherichia coli.